The chain runs to 557 residues: Glypican-4 (557 aa).

The N-terminal stretch at 1-18 (MARLGLLALLCTLAALSA) is a signal peptide. S357 bears the Phosphoserine mark. Residues S494, S498, and S500 are each glycosylated (O-linked (Xyl...) (glycosaminoglycan) serine). The N-linked (GlcNAc...) asparagine glycan is linked to N514. A lipid anchor (GPI-anchor amidated serine) is attached at S529. Residues 530 to 557 (AGGAHAEAKPYLLAALCILFLAVQGEWR) constitute a propeptide, removed in mature form.

Belongs to the glypican family. As to expression, highly expressed in developing brain and kidney.

It localises to the cell membrane. It is found in the secreted. The protein resides in the extracellular space. Cell surface proteoglycan that bears heparan sulfate. May be involved in the development of kidney tubules and of the central nervous system. This is Glypican-4 (Gpc4) from Mus musculus (Mouse).